We begin with the raw amino-acid sequence, 590 residues long: Aspartate--tRNA ligase (590 aa).

Glu-172 contacts L-aspartate. Residues Gln-196 to Lys-199 are aspartate. Arg-218 is an L-aspartate binding site. ATP is bound by residues Arg-218 to Glu-220 and Gln-227. His-449 lines the L-aspartate pocket. ATP is bound at residue Glu-483. L-aspartate is bound at residue Arg-490. Gly-535–Arg-538 provides a ligand contact to ATP.

Belongs to the class-II aminoacyl-tRNA synthetase family. Type 1 subfamily. As to quaternary structure, homodimer.

The protein localises to the cytoplasm. The catalysed reaction is tRNA(Asp) + L-aspartate + ATP = L-aspartyl-tRNA(Asp) + AMP + diphosphate. In terms of biological role, catalyzes the attachment of L-aspartate to tRNA(Asp) in a two-step reaction: L-aspartate is first activated by ATP to form Asp-AMP and then transferred to the acceptor end of tRNA(Asp). This Mannheimia succiniciproducens (strain KCTC 0769BP / MBEL55E) protein is Aspartate--tRNA ligase.